Reading from the N-terminus, the 157-residue chain is Protein Smg (157 aa).

Belongs to the Smg family.

The chain is Protein Smg from Buchnera aphidicola subsp. Acyrthosiphon pisum (strain 5A).